We begin with the raw amino-acid sequence, 220 residues long: 7-cyano-7-deazaguanine synthase (220 aa).

11 to 21 lines the ATP pocket; sequence VSGGMDSVTLM. Residues cysteine 186, cysteine 194, cysteine 197, and cysteine 200 each coordinate Zn(2+).

This sequence belongs to the QueC family. Zn(2+) is required as a cofactor.

The enzyme catalyses 7-carboxy-7-deazaguanine + NH4(+) + ATP = 7-cyano-7-deazaguanine + ADP + phosphate + H2O + H(+). It participates in purine metabolism; 7-cyano-7-deazaguanine biosynthesis. Catalyzes the ATP-dependent conversion of 7-carboxy-7-deazaguanine (CDG) to 7-cyano-7-deazaguanine (preQ(0)). In Porphyromonas gingivalis (strain ATCC 33277 / DSM 20709 / CIP 103683 / JCM 12257 / NCTC 11834 / 2561), this protein is 7-cyano-7-deazaguanine synthase.